Reading from the N-terminus, the 298-residue chain is Syntenin-1 (298 aa).

Ser-2 carries the N-acetylserine modification. The interaction with PDCD6IP stretch occupies residues 2–60 (SLYPSLEDLKVDKVIQAQTAFSANPANPAILSEASAPIPHDGNLYPRLYPELSQYMGLS). 3 short sequence motifs (LYPX(n)L motif) span residues 3 to 7 (LYPSL), 45 to 49 (LYPRL), and 49 to 53 (LYPEL). Phosphoserine is present on Ser-6. At Tyr-46 the chain carries Phosphotyrosine. 2 PDZ domains span residues 114–193 (EVIL…IRDR) and 198–273 (TITM…MPAF). Residues Asn-215 and 250–251 (KD) contribute to the a 1,2-diacyl-sn-glycero-3-phospho-(1D-myo-inositol-4,5-bisphosphate) site.

As to quaternary structure, monomer and homodimer. Interacts with SDC1, SDC2, SDC3, SDC4, NRXN2, EPHA7, EPHB1, NF2 isoform 1, TGFA and IL5RA. Interacts with NFASC and PTPRJ. Interacts with SDCBP2. Interacts with PDCD6IP. Forms a complex with PDCD6IP and SDC2. Interacts (via C-terminus) with TGFBR1. Binds to FZD7; this interaction is increased by inositol trisphosphate (IP3). Interacts with SMO. Post-translationally, phosphorylated on tyrosine residues. As to expression, expressed in lung cancers, including adenocarcinoma, squamous cell carcinoma and small-cell carcinoma (at protein level). Widely expressed. Expressed in fetal kidney, liver, lung and brain. In adult highest expression in heart and placenta.

It localises to the cell junction. The protein localises to the focal adhesion. It is found in the adherens junction. Its subcellular location is the cell membrane. The protein resides in the endoplasmic reticulum membrane. It localises to the nucleus. The protein localises to the melanosome. It is found in the cytoplasm. Its subcellular location is the cytosol. The protein resides in the cytoskeleton. It localises to the secreted. The protein localises to the extracellular exosome. It is found in the membrane raft. Its function is as follows. Multifunctional adapter protein involved in diverse array of functions including trafficking of transmembrane proteins, neuro and immunomodulation, exosome biogenesis, and tumorigenesis. Positively regulates TGFB1-mediated SMAD2/3 activation and TGFB1-induced epithelial-to-mesenchymal transition (EMT) and cell migration in various cell types. May increase TGFB1 signaling by enhancing cell-surface expression of TGFR1 by preventing the interaction between TGFR1 and CAV1 and subsequent CAV1-dependent internalization and degradation of TGFR1. In concert with SDC1/4 and PDCD6IP, regulates exosome biogenesis. Regulates migration, growth, proliferation, and cell cycle progression in a variety of cancer types. In adherens junctions may function to couple syndecans to cytoskeletal proteins or signaling components. Seems to couple transcription factor SOX4 to the IL-5 receptor (IL5RA). May also play a role in vesicular trafficking. Seems to be required for the targeting of TGFA to the cell surface in the early secretory pathway. The sequence is that of Syntenin-1 (SDCBP) from Homo sapiens (Human).